The chain runs to 299 residues: MKKLGTDLLKRGFAKMVKHGVVMDVTNVEQAKIAEEAGAAAVMALERVPADIRVQGGVARMSDPDMILEIKDAVSIPVMAKARIGHFVEAQVLESIGVDMIDESEVLTPADEINHINKKAFTAPFVCGARNLGEALRRIDEGAAMIRTKGEAGTGNVVEAVKHMRAVNEGIARVVGYHEMGLEAELVQMARNELKVPMEIILEVAKLKRLPVVNFAAGGIATPADAALMMQMGCDGVFVGSGIFKSGNPEIRAKAIVEATYNFDKPELIGEVSKNLGEAMVGINIDQIPEEMLLAKRGI.

D24 lines the D-ribose 5-phosphate pocket. K81 acts as the Schiff-base intermediate with D-ribose 5-phosphate in catalysis. G153 is a D-ribose 5-phosphate binding site. Residue R165 coordinates D-glyceraldehyde 3-phosphate. D-ribose 5-phosphate contacts are provided by residues G219 and 240 to 241 (GS).

This sequence belongs to the PdxS/SNZ family. As to quaternary structure, in the presence of PdxT, forms a dodecamer of heterodimers.

It catalyses the reaction aldehydo-D-ribose 5-phosphate + D-glyceraldehyde 3-phosphate + L-glutamine = pyridoxal 5'-phosphate + L-glutamate + phosphate + 3 H2O + H(+). The protein operates within cofactor biosynthesis; pyridoxal 5'-phosphate biosynthesis. Its function is as follows. Catalyzes the formation of pyridoxal 5'-phosphate from ribose 5-phosphate (RBP), glyceraldehyde 3-phosphate (G3P) and ammonia. The ammonia is provided by the PdxT subunit. Can also use ribulose 5-phosphate and dihydroxyacetone phosphate as substrates, resulting from enzyme-catalyzed isomerization of RBP and G3P, respectively. The protein is Pyridoxal 5'-phosphate synthase subunit PdxS of Methanococcus vannielii (strain ATCC 35089 / DSM 1224 / JCM 13029 / OCM 148 / SB).